The primary structure comprises 513 residues: GMP synthase [glutamine-hydrolyzing] (513 aa).

The Glutamine amidotransferase type-1 domain occupies 3-200 (SVTVLDFGSQ…LIDIAGIKPD (198 aa)). The active-site Nucleophile is the C80. Catalysis depends on residues H174 and E176. The region spanning 201 to 388 (WSPKSFIGHQ…LGIAEDILMR (188 aa)) is the GMPS ATP-PPase domain. An ATP-binding site is contributed by 228-234 (SGGVDST).

In terms of assembly, homodimer.

It carries out the reaction XMP + L-glutamine + ATP + H2O = GMP + L-glutamate + AMP + diphosphate + 2 H(+). The protein operates within purine metabolism; GMP biosynthesis; GMP from XMP (L-Gln route): step 1/1. In terms of biological role, catalyzes the synthesis of GMP from XMP. This Chlorobium phaeobacteroides (strain DSM 266 / SMG 266 / 2430) protein is GMP synthase [glutamine-hydrolyzing].